We begin with the raw amino-acid sequence, 235 residues long: NAD(P)H-hydrate epimerase (235 aa).

Positions 18–221 constitute a YjeF N-terminal domain; that stretch reads AAQIDEQLFT…SLVDEHELLM (204 aa). 65–69 serves as a coordination point for (6S)-NADPHX; sequence NNGGD. Positions 66 and 127 each coordinate K(+). Residues 131-137 and aspartate 160 contribute to the (6S)-NADPHX site; that span reads GFSFHPP. Serine 163 contacts K(+).

It belongs to the NnrE/AIBP family. K(+) is required as a cofactor.

It carries out the reaction (6R)-NADHX = (6S)-NADHX. The enzyme catalyses (6R)-NADPHX = (6S)-NADPHX. Functionally, catalyzes the epimerization of the S- and R-forms of NAD(P)HX, a damaged form of NAD(P)H that is a result of enzymatic or heat-dependent hydration. This is a prerequisite for the S-specific NAD(P)H-hydrate dehydratase to allow the repair of both epimers of NAD(P)HX. The protein is NAD(P)H-hydrate epimerase of Caenorhabditis elegans.